The chain runs to 130 residues: Mediator of RNA polymerase II transcription subunit 10 (130 aa).

The protein belongs to the Mediator complex subunit 10 family. As to quaternary structure, component of the Mediator complex.

It localises to the nucleus. Component of the Mediator complex, a coactivator involved in the regulated transcription of nearly all RNA polymerase II-dependent genes. Mediator functions as a bridge to convey information from gene-specific regulatory proteins to the basal RNA polymerase II transcription machinery. Mediator is recruited to promoters by direct interactions with regulatory proteins and serves as a scaffold for the assembly of a functional preinitiation complex with RNA polymerase II and the general transcription factors. The protein is Mediator of RNA polymerase II transcription subunit 10 (MED10) of Aedes aegypti (Yellowfever mosquito).